A 766-amino-acid chain; its full sequence is Semaphorin-4E (766 aa).

Residues 1-24 (MMSLLAVLCVLYVWSPAMLTGGLG) form the signal peptide. Over 25–664 (STLDSLPRKT…LHHVKEKERT (640 aa)) the chain is Extracellular. Residues 27 to 499 (LDSLPRKTVP…SEVGVVQLSI (473 aa)) enclose the Sema domain. N-linked (GlcNAc...) asparagine glycosylation occurs at asparagine 52. 4 cysteine pairs are disulfide-bonded: cysteine 100–cysteine 111, cysteine 129–cysteine 138, cysteine 261–cysteine 373, and cysteine 285–cysteine 329. N-linked (GlcNAc...) asparagine glycosylation occurs at asparagine 433. A PSI domain is found at 501–552 (ECGRYQTCLDCVLARDPHCGWDLDTEHCATINSIHRTRSSTVIQSLNDGDAS). Disulfide bonds link cysteine 502/cysteine 519 and cysteine 511/cysteine 528. Positions 555–640 (PAIGVSKPVN…QRKYQTQHVA (86 aa)) constitute an Ig-like C2-type domain. N-linked (GlcNAc...) asparagine glycosylation is found at asparagine 564 and asparagine 612. An intrachain disulfide couples cysteine 577 to cysteine 623. Residues 665–685 (LVAMVVILSLVLAALLIWNLY) form a helical membrane-spanning segment. The Cytoplasmic segment spans residues 686–766 (KGHLSLPCLH…LKYIDDESEI (81 aa)). The interval 724–750 (FNSNNNHANDQRYSSSRETDRLSTTAG) is disordered.

It belongs to the semaphorin family.

It is found in the membrane. This Danio rerio (Zebrafish) protein is Semaphorin-4E (sema4e).